A 481-amino-acid chain; its full sequence is MDLSNLTLTKIQELVLTKKCKIYDILLAYKNNYELNKDINGYIEFFDDSLEIAKRYDDFLRNCELEDLPLIGMLIAVKDNISIQDKSLTCASEILKGYISPYDATVIKRLKNKGAILIGRTNMDEFAMGSTCEFSYYGATLNPLNREYVIGGSSGGSAAVVAAFQAPFSLGSDTGGSVRLPASFSGILGFKPSYGGLSRYGLASYASSFDQIGFFAHSIEDIALILKHTCGADKMDSTSVDIFDDFYPLKIESLQGKNLAVIKELGEDLMDKNVASSFAKFKFDLLSKGINIKEVSIEEINFILSIYYTISPVEASSNLARYTGLCYGKRMSENLSLNDFYFKHRSNFLSEEVKRRIVLGNYLLSEGYDSKYYSKACEILQNLIIPKFNKLFESCDFIITPTSFVKPFRAGLDFDDPVKMYYSDICTVIANLIGAPAISLPYSKDKEGLSIGMQIIGRSKKDFELLSFSKNVIRELGLNGI.

Catalysis depends on charge relay system residues Lys78 and Ser153. The active-site Acyl-ester intermediate is the Ser177.

Belongs to the amidase family. GatA subfamily. In terms of assembly, heterotrimer of A, B and C subunits.

The enzyme catalyses L-glutamyl-tRNA(Gln) + L-glutamine + ATP + H2O = L-glutaminyl-tRNA(Gln) + L-glutamate + ADP + phosphate + H(+). In terms of biological role, allows the formation of correctly charged Gln-tRNA(Gln) through the transamidation of misacylated Glu-tRNA(Gln) in organisms which lack glutaminyl-tRNA synthetase. The reaction takes place in the presence of glutamine and ATP through an activated gamma-phospho-Glu-tRNA(Gln). This chain is Glutamyl-tRNA(Gln) amidotransferase subunit A, found in Borreliella afzelii (strain PKo) (Borrelia afzelii).